The following is a 334-amino-acid chain: Protein-methionine-sulfoxide reductase catalytic subunit MsrP (334 aa).

A signal peptide (tat-type signal) is located at residues Met-1–Ala-44. Mo-molybdopterin-binding positions include Asn-88, Tyr-91 to Glu-92, Cys-146, Thr-181, Asn-233, Arg-238, and Gly-249 to Lys-251.

Belongs to the MsrP family. As to quaternary structure, heterodimer of a catalytic subunit (MsrP) and a heme-binding subunit (MsrQ). Requires Mo-molybdopterin as cofactor. Predicted to be exported by the Tat system. The position of the signal peptide cleavage has not been experimentally proven.

The protein localises to the periplasm. The catalysed reaction is L-methionyl-[protein] + a quinone + H2O = L-methionyl-(S)-S-oxide-[protein] + a quinol. The enzyme catalyses L-methionyl-[protein] + a quinone + H2O = L-methionyl-(R)-S-oxide-[protein] + a quinol. In terms of biological role, part of the MsrPQ system that repairs oxidized periplasmic proteins containing methionine sulfoxide residues (Met-O), using respiratory chain electrons. Thus protects these proteins from oxidative-stress damage caused by reactive species of oxygen and chlorine generated by the host defense mechanisms. MsrPQ is essential for the maintenance of envelope integrity under bleach stress, rescuing a wide series of structurally unrelated periplasmic proteins from methionine oxidation, including the primary periplasmic chaperone SurA and the lipoprotein Pal. The catalytic subunit MsrP is non-stereospecific, being able to reduce both (R-) and (S-) diastereoisomers of methionine sulfoxide. The chain is Protein-methionine-sulfoxide reductase catalytic subunit MsrP from Escherichia coli O157:H7.